A 134-amino-acid chain; its full sequence is Prolactin (134 aa).

A disulfide bridge links cysteine 126 with cysteine 134.

The protein belongs to the somatotropin/prolactin family.

The protein localises to the secreted. The chain is Prolactin from Bufo japonicus (Japanese common toad).